A 670-amino-acid polypeptide reads, in one-letter code: Solute carrier organic anion transporter family member 1A3 (670 aa).

The Cytoplasmic portion of the chain corresponds to methionine 1–lysine 20. A helical membrane pass occupies residues valine 21–methionine 40. Residues serine 41–glycine 59 lie on the Extracellular side of the membrane. A helical transmembrane segment spans residues phenylalanine 60–glycine 80. Residues methionine 81–proline 86 are Cytoplasmic-facing. Residues isoleucine 87–glycine 111 form a helical membrane-spanning segment. The Extracellular segment spans residues arginine 112–serine 155. 2 N-linked (GlcNAc...) asparagine glycosylation sites follow: asparagine 124 and asparagine 135. A helical transmembrane segment spans residues leucine 156–glutamate 184. Residues asparagine 185 to lysine 203 lie on the Cytoplasmic side of the membrane. Residues methionine 204–threonine 224 traverse the membrane as a helical segment. The Extracellular segment spans residues glycine 225 to valine 242. The chain crosses the membrane as a helical span at residues glycine 243–proline 267. Over lysine 268 to serine 311 the chain is Cytoplasmic. A disordered region spans residues glutamate 277–lysine 296. Positions glutamate 283–lysine 292 are enriched in basic and acidic residues. Residues proline 312–asparagine 333 traverse the membrane as a helical segment. Residues isoleucine 334 to glutamate 353 lie on the Extracellular side of the membrane. Residues valine 354–methionine 377 form a helical membrane-spanning segment. At lysine 378–lysine 381 the chain is on the cytoplasmic side. A helical transmembrane segment spans residues isoleucine 382–asparagine 405. At phenylalanine 406–leucine 513 the chain is on the extracellular side. A Kazal-like domain is found at asparagine 433 to glutamine 488. 3 disulfides stabilise this stretch: cysteine 439–cysteine 469, cysteine 445–cysteine 465, and cysteine 454–cysteine 486. 2 N-linked (GlcNAc...) asparagine glycosylation sites follow: asparagine 483 and asparagine 492. A helical transmembrane segment spans residues leucine 514–leucine 536. At arginine 537–serine 545 the chain is on the cytoplasmic side. A helical transmembrane segment spans residues leucine 546 to isoleucine 571. Residues aspartate 572–serine 605 are Extracellular-facing. The chain crosses the membrane as a helical span at residues alanine 606–threonine 623. Residues arginine 624–leucine 670 lie on the Cytoplasmic side of the membrane.

Belongs to the organo anion transporter (TC 2.A.60) family. As to expression, all isoforms are detected in kidney, and many are kidney specific. Isoforms 2 and 13 are also detected in liver. Isoforms 4 and 9/K4 are ubiquitous, but isoform 9/K13 is kidney specific. Isoforms 5 and 14 are detected in all tissues tested, with the exception of pancreas and spleen. Isoforms 11 and 15 are detected in kidney, pancreas and testis. Isoform 7 is detected in kidney, liver, testis and spleen.

It is found in the cell membrane. In terms of biological role, mediates the Na(+)-independent transport of organic anions such as methotrexate, taurocholate, folate and prostaglandin E2. May contribute to renal secretion and/or reabsorption of hydrophobic anionic compounds. Mediates renal clearance of methotrexate from the blood. In Rattus norvegicus (Rat), this protein is Solute carrier organic anion transporter family member 1A3 (Slco1a3).